Here is a 103-residue protein sequence, read N- to C-terminus: Co-chaperonin GroES (103 aa).

This sequence belongs to the GroES chaperonin family. Heptamer of 7 subunits arranged in a ring. Interacts with the chaperonin GroEL.

The protein resides in the cytoplasm. Functionally, together with the chaperonin GroEL, plays an essential role in assisting protein folding. The GroEL-GroES system forms a nano-cage that allows encapsulation of the non-native substrate proteins and provides a physical environment optimized to promote and accelerate protein folding. GroES binds to the apical surface of the GroEL ring, thereby capping the opening of the GroEL channel. This Prochlorococcus marinus (strain MIT 9215) protein is Co-chaperonin GroES.